Consider the following 262-residue polypeptide: Pyridoxine 5'-phosphate synthase (262 aa).

Asn6 contacts 3-amino-2-oxopropyl phosphate. Residue 8–9 (DH) coordinates 1-deoxy-D-xylulose 5-phosphate. Arg17 lines the 3-amino-2-oxopropyl phosphate pocket. The Proton acceptor role is filled by His43. 1-deoxy-D-xylulose 5-phosphate-binding residues include Arg45 and His50. Residue Glu70 is the Proton acceptor of the active site. Residue Thr102 coordinates 1-deoxy-D-xylulose 5-phosphate. His215 (proton donor) is an active-site residue. 3-amino-2-oxopropyl phosphate contacts are provided by residues Gly216 and 237–238 (GH).

This sequence belongs to the PNP synthase family. As to quaternary structure, homooctamer; tetramer of dimers.

Its subcellular location is the cytoplasm. The enzyme catalyses 3-amino-2-oxopropyl phosphate + 1-deoxy-D-xylulose 5-phosphate = pyridoxine 5'-phosphate + phosphate + 2 H2O + H(+). The protein operates within cofactor biosynthesis; pyridoxine 5'-phosphate biosynthesis; pyridoxine 5'-phosphate from D-erythrose 4-phosphate: step 5/5. In terms of biological role, catalyzes the complicated ring closure reaction between the two acyclic compounds 1-deoxy-D-xylulose-5-phosphate (DXP) and 3-amino-2-oxopropyl phosphate (1-amino-acetone-3-phosphate or AAP) to form pyridoxine 5'-phosphate (PNP) and inorganic phosphate. The chain is Pyridoxine 5'-phosphate synthase from Helicobacter pylori (strain ATCC 700392 / 26695) (Campylobacter pylori).